Here is a 455-residue protein sequence, read N- to C-terminus: Beta-cyclopiazonate dehydrogenase (455 aa).

Residues 1 to 25 (MAVRIARFLGLSTVAYLALANGIDA) form the signal peptide.

This sequence belongs to the beta-cyclopiazonate dehydrogenase family. The cofactor is FAD.

It carries out the reaction beta-cyclopiazonate + A = alpha-cyclopiazonate + AH2. Functionally, beta-cyclopiazonate dehydrogenase involved in the synthesis of the fungal neurotoxin alpha-cyclopiazonic acid (CPA). CpaO carries out the dehydrogenation of beta-CPA to yield an unstable enimine product, which is captured by intramolecular cyclization to create the pentacyclic fused scaffold of alpha-cyclopiazonate. The chain is Beta-cyclopiazonate dehydrogenase from Aspergillus oryzae (strain ATCC 42149 / RIB 40) (Yellow koji mold).